Here is a 78-residue protein sequence, read N- to C-terminus: Conotoxin 6 (78 aa).

A signal peptide spans 1 to 22 (MKLTCMMIVAVLFLTAWIFITA). The propeptide occupies 23–51 (DNSRNGIENLPRMRRHEMKNPKASKLNKR). Intrachain disulfides connect Cys-53/Cys-69, Cys-60/Cys-73, and Cys-68/Cys-77.

Belongs to the conotoxin O1 superfamily. Expressed by the venom duct.

It localises to the secreted. The protein is Conotoxin 6 of Conus imperialis (Imperial cone).